Here is a 151-residue protein sequence, read N- to C-terminus: Probable cGMP 3',5'-cyclic phosphodiesterase subunit delta (151 aa).

It belongs to the PDE6D/unc-119 family. In terms of assembly, interacts with Pde6.

It localises to the nucleus. Its subcellular location is the cytoplasm. In Drosophila sechellia (Fruit fly), this protein is Probable cGMP 3',5'-cyclic phosphodiesterase subunit delta.